We begin with the raw amino-acid sequence, 346 residues long: Sensor histidine kinase GraS (346 aa).

2 consecutive transmembrane segments (helical) span residues 15-35 and 43-63; these read MNWI…SLID and LFYI…LTYF. The Histidine kinase domain occupies 126-332; it reads EFVHDIKTPV…TVRLIFPLQN (207 aa).

Interacts with GraX.

It localises to the cell membrane. The enzyme catalyses ATP + protein L-histidine = ADP + protein N-phospho-L-histidine.. Member of the two-component regulatory system GraR/GraS involved in resistance against cationic antimicrobial peptides (CAMPs). Functions as a sensor protein kinase which phosphorylates GraR through the auxiliary protein GraX. In turn, GraR up-regulates many genes such as adhesins, exoproteins, transporters, toxins, and proteins involved in cell wall synthesis. Down-regulates the expression of many genes involved in RNA and amino acid synthesis or glycolysis. This is Sensor histidine kinase GraS (graS) from Staphylococcus aureus (strain COL).